We begin with the raw amino-acid sequence, 425 residues long: tRNA(Ile)-lysidine synthase (425 aa).

An ATP-binding site is contributed by 27–32 (SGGLDS).

The protein belongs to the tRNA(Ile)-lysidine synthase family.

It localises to the cytoplasm. It catalyses the reaction cytidine(34) in tRNA(Ile2) + L-lysine + ATP = lysidine(34) in tRNA(Ile2) + AMP + diphosphate + H(+). Its function is as follows. Ligates lysine onto the cytidine present at position 34 of the AUA codon-specific tRNA(Ile) that contains the anticodon CAU, in an ATP-dependent manner. Cytidine is converted to lysidine, thus changing the amino acid specificity of the tRNA from methionine to isoleucine. The chain is tRNA(Ile)-lysidine synthase from Streptococcus pneumoniae (strain P1031).